Reading from the N-terminus, the 272-residue chain is Merozoite surface protein 2 (272 aa).

The signal sequence occupies residues 1–20 (MKVIKTLSIINFFIFVTFNI). N-linked (GlcNAc...) asparagine glycans are attached at residues asparagine 22 and asparagine 36. The interval 44-198 (AESKPSTGAG…EQTESPELQS (155 aa)) is polymorphic region. Residues 45 to 233 (ESKPSTGAGG…DSQKECTDGN (189 aa)) are disordered. Gly residues predominate over residues 51 to 82 (GAGGSAGGSAGGSAGGSAGGSAGGSAGSGDGN). 6 repeat units span residues 53–56 (GGSA), 57–60 (GGSA), 61–64 (GGSA), 65–68 (GGSA), 69–72 (GGSA), and 73–76 (GGSA). The tract at residues 53-76 (GGSAGGSAGGSAGGSAGGSAGGSA) is 6 X 4 AA tandem repeats of G-G-S-A. Residues 83-119 (GADAEGSSSTPATTTTTKTTTTTTTTNDAEASTSTSS) are compositionally biased toward low complexity. Over residues 122 to 137 (PNHKNAETNPKGKGEV) the composition is skewed to basic and acidic residues. Polar residues-rich tracts occupy residues 139–165 (EPNQANKETQNNSNVQQDSQTKSNVPP) and 172–200 (KSPTAQPEQAENSAPTAEQTESPELQSAP). Asparagine 149 carries an N-linked (GlcNAc...) asparagine glycan. Asparagine 221 carries an N-linked (GlcNAc...) asparagine glycan. A disulfide bond links cysteine 229 and cysteine 237. N-linked (GlcNAc...) asparagine glycosylation is found at asparagine 245 and asparagine 246. Residue asparagine 246 is the site of GPI-anchor amidated asparagine attachment. A propeptide spans 247-272 (SSNIASINKFVVLISATLVLSFAIFI) (removed in mature form).

It is found in the cell membrane. Functionally, may play a role in the merozoite attachment to the erythrocyte. The protein is Merozoite surface protein 2 of Plasmodium falciparum (isolate 3D7).